The sequence spans 253 residues: Imidazole glycerol phosphate synthase subunit HisF (253 aa).

Catalysis depends on residues Asp-11 and Asp-130.

The protein belongs to the HisA/HisF family. Heterodimer of HisH and HisF.

Its subcellular location is the cytoplasm. The enzyme catalyses 5-[(5-phospho-1-deoxy-D-ribulos-1-ylimino)methylamino]-1-(5-phospho-beta-D-ribosyl)imidazole-4-carboxamide + L-glutamine = D-erythro-1-(imidazol-4-yl)glycerol 3-phosphate + 5-amino-1-(5-phospho-beta-D-ribosyl)imidazole-4-carboxamide + L-glutamate + H(+). It functions in the pathway amino-acid biosynthesis; L-histidine biosynthesis; L-histidine from 5-phospho-alpha-D-ribose 1-diphosphate: step 5/9. Functionally, IGPS catalyzes the conversion of PRFAR and glutamine to IGP, AICAR and glutamate. The HisF subunit catalyzes the cyclization activity that produces IGP and AICAR from PRFAR using the ammonia provided by the HisH subunit. This is Imidazole glycerol phosphate synthase subunit HisF from Geobacter metallireducens (strain ATCC 53774 / DSM 7210 / GS-15).